The following is a 396-amino-acid chain: DNA replication and repair protein RecF (396 aa).

30–37 is an ATP binding site; the sequence is GANGSGKT.

The protein belongs to the RecF family.

The protein localises to the cytoplasm. In terms of biological role, the RecF protein is involved in DNA metabolism; it is required for DNA replication and normal SOS inducibility. RecF binds preferentially to single-stranded, linear DNA. It also seems to bind ATP. This Thermomicrobium roseum (strain ATCC 27502 / DSM 5159 / P-2) protein is DNA replication and repair protein RecF.